Here is a 208-residue protein sequence, read N- to C-terminus: Large ribosomal subunit protein bL25 (208 aa).

Residues V184–D208 are disordered. Over residues S187–D208 the composition is skewed to low complexity.

Belongs to the bacterial ribosomal protein bL25 family. CTC subfamily. Part of the 50S ribosomal subunit; part of the 5S rRNA/L5/L18/L25 subcomplex. Contacts the 5S rRNA. Binds to the 5S rRNA independently of L5 and L18.

This is one of the proteins that binds to the 5S RNA in the ribosome where it forms part of the central protuberance. The sequence is that of Large ribosomal subunit protein bL25 from Ehrlichia ruminantium (strain Gardel).